The sequence spans 497 residues: MDASSVPPKVDDYGMYTTEISHHNPIELKNLLSSSDSRRNSQDEDSLPNNTNLIKEIDWQGEKVKTYPLNYQTVPLVKLQVIACLIMFVVFGMNDQTVGALLPTLIEYYHISRVDVSNVFIVQLCGYVMASLSKERLNKHFGMRGGMLLAAGLCIVFLIILATAPSSFYVCMFCGLPLGLGIGILDSTGNVLMGSLLVHKNELMGIMHGLYGAAAMVTPPLVSYFVEWGHWSLFFLIPLFFSIIGMIVIFPAFKFETASKYDYLCSVENKESNNDVEEAGDNSLMESTKASPGFFELLRNPAIFLYSLYLFLYLGAEITTGSWFFSYLLETKSSNKVAMSYIAASFWTGLTVGRLCLGFVTERFFENEYKASKAYAFLTLSSYTLFVLVGLINSSSVFYFVVLFFVVFCCGTFIGPLFPNASIVALQVLPKRLHVSGVGVAVAVGGCGGAAIPYLAGVIAHTVGIQYIPLLCWIMVALFTLEWTLYPKFIKGHEEYF.

Over 1-72 (MDASSVPPKV…KVKTYPLNYQ (72 aa)) the chain is Lumenal. Phosphoserine occurs at positions 37 and 41. Asn49 carries an N-linked (GlcNAc...) asparagine glycan. Residues 73–93 (TVPLVKLQVIACLIMFVVFGM) traverse the membrane as a helical segment. Residues 94 to 144 (NDQTVGALLPTLIEYYHISRVDVSNVFIVQLCGYVMASLSKERLNKHFGMR) are Cytoplasmic-facing. A helical membrane pass occupies residues 145-165 (GGMLLAAGLCIVFLIILATAP). At 166–167 (SS) the chain is on the lumenal side. Residues 168-188 (FYVCMFCGLPLGLGIGILDST) traverse the membrane as a helical segment. Topologically, residues 189-205 (GNVLMGSLLVHKNELMG) are cytoplasmic. The chain crosses the membrane as a helical span at residues 206-226 (IMHGLYGAAAMVTPPLVSYFV). The Lumenal segment spans residues 227-232 (EWGHWS). The helical transmembrane segment at 233–253 (LFFLIPLFFSIIGMIVIFPAF) threads the bilayer. The Cytoplasmic portion of the chain corresponds to 254-300 (KFETASKYDYLCSVENKESNNDVEEAGDNSLMESTKASPGFFELLRN). A helical membrane pass occupies residues 301–321 (PAIFLYSLYLFLYLGAEITTG). Over 322–340 (SWFFSYLLETKSSNKVAMS) the chain is Lumenal. A helical membrane pass occupies residues 341-361 (YIAASFWTGLTVGRLCLGFVT). Residues 362 to 373 (ERFFENEYKASK) lie on the Cytoplasmic side of the membrane. A helical transmembrane segment spans residues 374 to 394 (AYAFLTLSSYTLFVLVGLINS). At 395 to 397 (SSV) the chain is on the lumenal side. Residues 398-418 (FYFVVLFFVVFCCGTFIGPLF) traverse the membrane as a helical segment. The Cytoplasmic portion of the chain corresponds to 419–439 (PNASIVALQVLPKRLHVSGVG). The helical transmembrane segment at 440 to 460 (VAVAVGGCGGAAIPYLAGVIA) threads the bilayer. The Lumenal segment spans residues 461 to 462 (HT). The chain crosses the membrane as a helical span at residues 463-483 (VGIQYIPLLCWIMVALFTLEW). Residues 484–497 (TLYPKFIKGHEEYF) lie on the Cytoplasmic side of the membrane.

The protein belongs to the major facilitator superfamily.

The protein resides in the golgi apparatus. It localises to the cis-Golgi network membrane. In terms of biological role, probable transporter. The sequence is that of Bypass of stop codon protein 6 (BSC6) from Saccharomyces cerevisiae (strain ATCC 204508 / S288c) (Baker's yeast).